We begin with the raw amino-acid sequence, 436 residues long: 3-ketoacyl-CoA thiolase (436 aa).

Cysteine 99 acts as the Acyl-thioester intermediate in catalysis. Residues histidine 392 and cysteine 422 each act as proton acceptor in the active site.

It belongs to the thiolase-like superfamily. Thiolase family. Heterotetramer of two alpha chains (FadJ) and two beta chains (FadI).

It localises to the cytoplasm. The enzyme catalyses an acyl-CoA + acetyl-CoA = a 3-oxoacyl-CoA + CoA. It functions in the pathway lipid metabolism; fatty acid beta-oxidation. Functionally, catalyzes the final step of fatty acid oxidation in which acetyl-CoA is released and the CoA ester of a fatty acid two carbons shorter is formed. The polypeptide is 3-ketoacyl-CoA thiolase (Shewanella loihica (strain ATCC BAA-1088 / PV-4)).